The following is a 299-amino-acid chain: NADH-cytochrome b5 reductase 2 (299 aa).

The helical transmembrane segment at 13-35 (SFKVLAPFAAAVGSVGIAYQYST) threads the bilayer. Residues 50-154 (DEWIDLKLAK…KGPVVKWKWE (105 aa)) form the FAD-binding FR-type domain. 157–192 (QYKSIALIGGGTGITPLYQLMHEITKNPEDKTKVNL) serves as a coordination point for FAD.

It belongs to the flavoprotein pyridine nucleotide cytochrome reductase family. FAD serves as cofactor.

The protein resides in the mitochondrion outer membrane. The enzyme catalyses 2 Fe(III)-[cytochrome b5] + NADH = 2 Fe(II)-[cytochrome b5] + NAD(+) + H(+). Functionally, may mediate the reduction of outer membrane cytochrome b5. In Debaryomyces hansenii (strain ATCC 36239 / CBS 767 / BCRC 21394 / JCM 1990 / NBRC 0083 / IGC 2968) (Yeast), this protein is NADH-cytochrome b5 reductase 2 (MCR1).